We begin with the raw amino-acid sequence, 316 residues long: Vacuolar morphogenesis protein 7 (316 aa).

Residues 1-124 (MAANSVGKMS…QDFLQLSKPN (124 aa)) form the PX domain. Residues 168-186 (RARTKLHKLRERLEQDVQK) adopt a coiled-coil conformation. The region spanning 250–312 (MQMVRDQEQE…QIANKKARHF (63 aa)) is the t-SNARE coiled-coil homology domain.

In terms of assembly, possibly multimeric. Associates with VAM3.

Its subcellular location is the vacuole. Essential for proper morphogenesis of the vacuole. May exist as structural reinforcement on the surface of the vacuolar membrane and be required for maintenance against rupture by osmotic pressure. The sequence is that of Vacuolar morphogenesis protein 7 (VAM7) from Saccharomyces cerevisiae (strain ATCC 204508 / S288c) (Baker's yeast).